Here is a 347-residue protein sequence, read N- to C-terminus: GMP reductase (347 aa).

108–131 (ADFEKTKQILDLNPALNFVCIDVA) contacts NADP(+). K(+)-binding residues include Gly181 and Gly183. The active-site Thioimidate intermediate is Cys186. 216 to 239 (IVSDGGCTTPGDVAKAFGGGADFV) is a binding site for NADP(+).

The protein belongs to the IMPDH/GMPR family. GuaC type 1 subfamily. In terms of assembly, homotetramer.

It catalyses the reaction IMP + NH4(+) + NADP(+) = GMP + NADPH + 2 H(+). Its function is as follows. Catalyzes the irreversible NADPH-dependent deamination of GMP to IMP. It functions in the conversion of nucleobase, nucleoside and nucleotide derivatives of G to A nucleotides, and in maintaining the intracellular balance of A and G nucleotides. This Shigella flexneri serotype 5b (strain 8401) protein is GMP reductase.